The sequence spans 464 residues: uncharacterized protein (464 aa).

12 helical membrane passes run 7-27 (VLNVFSLVMINVIAVDSLRTL), 37-57 (LVFYYIFAALTFFIPVALVAA), 94-114 (VVWYPTMLAFIAATLSYLIAP), 121-141 (FYLLGTALTLFWVFTFLNCFG), 153-173 (ASIGTLLPMIVIIVLGAVWIF), 196-216 (LSLFSAVLFGLIGMEMSAVHA), 231-251 (FYSALLIISTLSLGSLAIVIV), 282-302 (VIAVLIILGGLSGVSAWIIGP), 329-349 (VAILLTQGVIFTVLSTVFILL), 359-379 (LSDLSAQMALLVYIMMFAAAI), 401-421 (MSLISGIGIICCIAAMIVGFI), and 432-452 (FLFECFLIGGLILFVFIPWLF).

This sequence belongs to the amino acid-polyamine-organocation (APC) superfamily.

Its subcellular location is the cell membrane. This is an uncharacterized protein from Legionella pneumophila subsp. pneumophila (strain Philadelphia 1 / ATCC 33152 / DSM 7513).